Consider the following 186-residue polypeptide: MTSVAQRQAQPAQPSTSQTAAPTRTQTETSSPAILRLRGAHSNGRSVQWRSDVVDNEGLGRKKSKVCCIYHRPKGVDESSDDSSSSSDSSSSSDSDSDPEPDQDKRITSGGGSSGRGHRHSHDHDHDGREGGCNHDHGRGRKHGNKGKKTERRPSPNAYEKMPKYKPKDGGAGPSNSETQGPGGSK.

A compositionally biased stretch (polar residues) spans 1 to 32 (MTSVAQRQAQPAQPSTSQTAAPTRTQTETSSP). The segment at 1 to 186 (MTSVAQRQAQ…SETQGPGGSK (186 aa)) is disordered. Low complexity predominate over residues 82-94 (DSSSSSDSSSSSD). Basic and acidic residues predominate over residues 122-137 (HDHDHDGREGGCNHDH). Over residues 138–151 (GRGRKHGNKGKKTE) the composition is skewed to basic residues.

This sequence belongs to the YPI1 family.

The protein resides in the nucleus. In terms of biological role, regulator of type 1 phosphatases which maintains protein phosphatase activity under strict control. In Neurospora crassa (strain ATCC 24698 / 74-OR23-1A / CBS 708.71 / DSM 1257 / FGSC 987), this protein is Type 1 phosphatases regulator ypi-1 (ypi-1).